A 437-amino-acid polypeptide reads, in one-letter code: Trigger factor (437 aa).

Positions 163-248 (DDRVTVDFEG…VKKIEASHLP (86 aa)) constitute a PPIase FKBP-type domain.

The protein belongs to the FKBP-type PPIase family. Tig subfamily.

It localises to the cytoplasm. It catalyses the reaction [protein]-peptidylproline (omega=180) = [protein]-peptidylproline (omega=0). Functionally, involved in protein export. Acts as a chaperone by maintaining the newly synthesized protein in an open conformation. Functions as a peptidyl-prolyl cis-trans isomerase. The polypeptide is Trigger factor (Variovorax paradoxus (strain S110)).